A 662-amino-acid polypeptide reads, in one-letter code: Polyunsaturated fatty acid lipoxygenase ALOX15 (662 aa).

The PLAT domain maps to 2-114 (GLYRIRVSTG…VLSLPEGTGR (113 aa)). Residues 115–662 (TVGDDPQGLF…PSIVENSVAI (548 aa)) enclose the Lipoxygenase domain. Positions 360, 365, 540, 544, and 662 each coordinate Fe cation.

It belongs to the lipoxygenase family. As to quaternary structure, interacts with PEBP1; in response to IL13/interleukin-13, prevents the interaction of PEBP1 with RAF1 to activate the ERK signaling cascade. It depends on Fe cation as a cofactor.

The protein localises to the cytoplasm. Its subcellular location is the cytosol. The protein resides in the cell membrane. It localises to the lipid droplet. The catalysed reaction is (5Z,8Z,11Z,14Z)-eicosatetraenoate + O2 = (12S)-hydroperoxy-(5Z,8Z,10E,14Z)-eicosatetraenoate. It catalyses the reaction (9Z,12Z)-octadecadienoate + O2 = (13S)-hydroperoxy-(9Z,11E)-octadecadienoate. The enzyme catalyses (5Z,8Z,11Z,14Z)-eicosatetraenoate + O2 = (15S)-hydroperoxy-(5Z,8Z,11Z,13E)-eicosatetraenoate. It carries out the reaction (5Z,8Z,11Z,14Z)-eicosatetraenoate + 2 O2 = (14R,15S)-dihydroperoxy-(5Z,8Z,10E,12E)-eicosatetraenoate. The catalysed reaction is (5Z,8Z,11Z,14Z)-eicosatetraenoate + 2 O2 = (8S,15S)-dihydroperoxy-(5Z,9E,11Z,13E)-eicosatetraenoate. It catalyses the reaction (14S,15R)-epoxy-(5Z,8Z,11Z)-eicosatrienoate + O2 = (8S)-hydroperoxy-(14S,15R)-epoxy-(5Z,9E,11Z)-eicosatrienoate. The enzyme catalyses (14S,15R)-epoxy-(5Z,8Z,11Z)-eicosatrienoate + O2 = (12S)-hydroperoxy-(14S,15R)-epoxy-(5Z,8Z,10E)-eicosatrienoate. It carries out the reaction (14R,15S)-epoxy-(5Z,8Z,11Z)-eicosatrienoate + O2 = (5S)-hydroperoxy-(14R,15S)-epoxy-(6E,8Z,11Z)-eicosatrienoate. The catalysed reaction is (14R,15S)-epoxy-(5Z,8Z,11Z)-eicosatrienoate + O2 = (12S)-hydroperoxy-(14R,15S)-epoxy-(5Z,8Z,10E)-eicosatrienoate. It catalyses the reaction (15R)-hydroperoxy-(5Z,8Z,11Z,13E)-eicosatetraenoate = 15-oxo-(5Z,8Z,11Z,13E)-eicosatetraenoate + H2O. The enzyme catalyses (15S)-hydroperoxy-(5Z,8Z,11Z,13E)-eicosatetraenoate = (14S,15S)-epoxy-(5Z,8Z,10E,12E)-eicosatetraenoate + H2O. It carries out the reaction (12S)-hydroperoxy-(5Z,8Z,10E,14Z)-eicosatetraenoate = (8S)-hydroxy-(11S,12S)-epoxy-(5Z,9E,14Z)-eicosatrienoate. The catalysed reaction is (4Z,7Z,10Z,13Z,16Z)-docosapentaenoate + O2 = 14-hydroperoxy-(4Z,7Z,10Z,12E,16Z)-docosapentaenoate. It catalyses the reaction (7Z,10Z,13Z,16Z,19Z)-docosapentaenoate + O2 = 14-hydroperoxy-(7Z,10Z,12E,16Z,19Z)-docosapentaenoate. The enzyme catalyses (4Z,7Z,10Z,13Z,16Z,19Z)-docosahexaenoate + O2 = (14S)-hydroperoxy-(4Z,7Z,10Z,12E,16Z,19Z)-docosahexaenoate. It carries out the reaction (4Z,7Z,10Z,13Z,16Z,19Z)-docosahexaenoate + O2 = (17S)-hydroperoxy-(4Z,7Z,10Z,13Z,15E,19Z)-docosahexaenoate. The catalysed reaction is (7S)-hydroperoxy-(4Z,8E,10Z,13Z,16Z,19Z)-docosahexaenoate + O2 = (7S,14S)-dihydroperoxy-(4Z,8E,10Z,12E,16Z,19Z)-docosahexaenoate. It catalyses the reaction (7S)-hydroperoxy-(4Z,8E,10Z,13Z,16Z,19Z)-docosahexaenoate + O2 = (7S,17S)-dihydroperoxy-(4Z,8E,10Z,13Z,15E,19Z)-docosahexaenoate. The enzyme catalyses (4Z,7Z,10Z,13Z,16Z,19Z)-docosahexaenoate + O2 = (11S)-hydroperoxy-(4Z,7Z,9E,13Z,16Z,19Z)-docosahexaenoate. It carries out the reaction N-(5Z,8Z,11Z,14Z)-eicosatetraenoyl-taurine + O2 = N-(12S)-hydroperoxy-(5Z,8Z,10E,14Z)-eicosatetraenoyl-taurine. The catalysed reaction is N-(5Z,8Z,11Z,14Z)-eicosatetraenoyl-gamma-aminobutanoate + O2 = N-(12S)-hydroperoxy-(5Z,8Z,10E,14Z)-eicosatetraenoyl-gamma-aminobutanoate. It catalyses the reaction N-(5Z,8Z,11Z,14Z)-eicosatetraenoyl-glycine + O2 = N-(12S)-hydroperoxy-(5Z,8Z,10E,14Z)-eicosatetraenoyl-glycine. The enzyme catalyses N-(5Z,8Z,11Z,14Z)-eicosatetraenoyl-L-alanine + O2 = N-(12S)-hydroperoxy-(5Z,8Z,10E,14Z)-eicosatetraenoyl-alanine. It carries out the reaction N-(5Z,8Z,11Z,14Z)-eicosatetraenoyl-taurine + O2 = N-(15S)-hydroperoxy-(5Z,8Z,11Z,13E)-eicosatetraenoyl-taurine. The catalysed reaction is N-(5Z,8Z,11Z,14Z)-eicosatetraenoyl-gamma-aminobutanoate + O2 = N-(15S)-hydroperoxy-(5Z,8Z,11Z,13E)-eicosatetraenoyl-gamma-aminobutanoate. It catalyses the reaction N-(5Z,8Z,11Z,14Z)-eicosatetraenoyl-glycine + O2 = N-(15S)-hydroperoxy-(5Z,8Z,11Z,13E)-eicosatetraenoyl-glycine. The enzyme catalyses N-(5Z,8Z,11Z,14Z)-eicosatetraenoyl-L-alanine + O2 = N-(15S)-hydroperoxy-(5Z,8Z,11Z,13E)-eicosatetraenoyl-alanine. Its pathway is lipid metabolism; hydroperoxy eicosatetraenoic acid biosynthesis. Its function is as follows. Non-heme iron-containing dioxygenase that catalyzes the stereo-specific peroxidation of free and esterified polyunsaturated fatty acids generating a spectrum of bioactive lipid mediators. It inserts peroxyl groups at C12 or C15 of arachidonate ((5Z,8Z,11Z,14Z)-eicosatetraenoate) producing both 12-hydroperoxyeicosatetraenoate/12-HPETE and 15-hydroperoxyeicosatetraenoate/15-HPETE. It may then act on 12-HPETE to produce hepoxilins, which may show pro-inflammatory properties. Can also peroxidize linoleate ((9Z,12Z)-octadecadienoate) to 13-hydroperoxyoctadecadienoate. May participate in the sequential oxidations of DHA ((4Z,7Z,10Z,13Z,16Z,19Z)-docosahexaenoate) to generate specialized pro-resolving mediators (SPMs)like resolvin D5 ((7S,17S)-diHPDHA) and (7S,14S)-diHPDHA, that actively down-regulate the immune response and have anti-aggregation properties with platelets. Can convert epoxy fatty acids to hydroperoxy-epoxides derivatives followed by an intramolecular nucleophilic substitution leading to the formation of monocyclic endoperoxides. Plays an important role during the maintenance of self-tolerance by peroxidizing membrane-bound phosphatidylethanolamine which can then signal the sorting process for clearance of apoptotic cells during inflammation and prevent an autoimmune response. In addition to its role in the immune and inflammatory responses, this enzyme may play a role in epithelial wound healing in the cornea through production of lipoxin A4 (LXA(4)) and docosahexaenoic acid-derived neuroprotectin D1 (NPD1; 10R,17S-HDHA), both lipid autacoids exhibit anti-inflammatory and neuroprotective properties. Furthermore, it may regulate actin polymerization which is crucial for several biological processes such as the phagocytosis of apoptotic cells. It is also implicated in the generation of endogenous ligands for peroxisome proliferator activated receptor (PPAR-gamma), hence modulating macrophage development and function. It may also exert a negative effect on skeletal development by regulating bone mass through this pathway. As well as participates in ER stress and downstream inflammation in adipocytes, pancreatic islets, and liver. Finally, it is also involved in the cellular response to IL13/interleukin-13. In Pongo abelii (Sumatran orangutan), this protein is Polyunsaturated fatty acid lipoxygenase ALOX15.